The chain runs to 243 residues: MNAADISRAPPGYLEVAWIADTCKLLMGLGWTTNYAGMIYKSLKDRTYGMALMPLCCNFAWELTYAVIYPFGSRQDKFTHYFGLMLNCGVMYTAVKNAEREWTHAPLVRRNLPFIFIICIAAWTTAHLALALQIGPSHAQAFSAYGCQLLLSVGALCQLLSRGSSRGASYFLWFCRFFGSLVLIPQDVLRYRYWRQDHEYMGSPLYIWFVSIFLLLDGSYALCLWYVRRFESEQEEAKKAKSI.

6 consecutive transmembrane segments (helical) span residues 11–31, 51–71, 112–132, 141–161, 169–189, and 207–227; these read PGYL…GLGW, ALMP…IYPF, LPFI…ALAL, AFSA…QLLS, SYFL…QDVL, and IWFV…LWYV.

This sequence belongs to the paxB family.

The protein localises to the membrane. It functions in the pathway secondary metabolite biosynthesis; terpenoid biosynthesis. Terpene cyclase; part of the gene cluster that mediates the biosynthesis of the diterpenoid pyrones subglutinols A and B. The first step of the pathway is the synthesis of the alpha-pyrone moiety by the polyketide synthase dpmaA via condensation of one acetyl-CoA starter unit with 3 malonyl-CoA units and 2 methylations. The alpha-pyrone is then combined with geranylgeranyl pyrophosphate (GGPP) formed by the GGPP synthase dpmaD through the action of the prenyltransferase dpmaC to yield a linear alpha-pyrone diterpenoid. Subsequent steps in the diterpenoid pyrone biosynthetic pathway involve the decalin core formation, which is initiated by the epoxidation of the C10-C11 olefin by the FAD-dependent oxidoreductase dpmaE, and is followed by a cyclization cascade catalyzed by the terpene cyclase dpmaB. The dehydrogenase dpmaF is then involved in tetrahydrofuran (THF) ring formation at the C5 unit to complete the formation of subglutinols A and B. The chain is Terpene cyclase dpmaB from Metarhizium anisopliae (Entomophthora anisopliae).